The sequence spans 64 residues: Antimicrobial peptide 1 (64 aa).

Residues 1–26 (MAKVSSSLLKFAIVLILVLSMSAIIS) form the signal peptide. Intrachain disulfides connect C29-C46, C36-C50, and C45-C61.

This sequence belongs to the AMP family.

It is found in the secreted. Its function is as follows. Possesses antifungal and antibacterial activity. The chain is Antimicrobial peptide 1 from Mesembryanthemum crystallinum (Common ice plant).